Reading from the N-terminus, the 98-residue chain is Large ribosomal subunit protein uL23 (98 aa).

It belongs to the universal ribosomal protein uL23 family. As to quaternary structure, part of the 50S ribosomal subunit. Contacts protein L29, and trigger factor when it is bound to the ribosome.

One of the early assembly proteins it binds 23S rRNA. One of the proteins that surrounds the polypeptide exit tunnel on the outside of the ribosome. Forms the main docking site for trigger factor binding to the ribosome. This chain is Large ribosomal subunit protein uL23, found in Streptococcus pneumoniae serotype 19F (strain G54).